Here is a 118-residue protein sequence, read N- to C-terminus: Peptidyl-tRNA hydrolase (118 aa).

It belongs to the PTH2 family.

It localises to the cytoplasm. The catalysed reaction is an N-acyl-L-alpha-aminoacyl-tRNA + H2O = an N-acyl-L-amino acid + a tRNA + H(+). The natural substrate for this enzyme may be peptidyl-tRNAs which drop off the ribosome during protein synthesis. The polypeptide is Peptidyl-tRNA hydrolase (Thermococcus onnurineus (strain NA1)).